Here is a 556-residue protein sequence, read N- to C-terminus: Membrane protein insertase YidC (556 aa).

A helical transmembrane segment spans residues 5-25; it reads TLTAIVLSFVLLTAFQFYMAW. Positions 36-74 are disordered; the sequence is QVQSGESSAPAPLASTAPVADALPPPVEGMAGSAPQQAM. Positions 42 to 55 are enriched in low complexity; sequence SSAPAPLASTAPVA. The next 4 membrane-spanning stretches (helical) occupy residues 370–390, 441–461, 468–488, and 510–530; these read NYGV…FPLA, LPIL…FLSV, FMLW…PLLM, and IMMF…SGLV.

The protein belongs to the OXA1/ALB3/YidC family. Type 1 subfamily. As to quaternary structure, interacts with the Sec translocase complex via SecD. Specifically interacts with transmembrane segments of nascent integral membrane proteins during membrane integration.

Its subcellular location is the cell inner membrane. In terms of biological role, required for the insertion and/or proper folding and/or complex formation of integral membrane proteins into the membrane. Involved in integration of membrane proteins that insert both dependently and independently of the Sec translocase complex, as well as at least some lipoproteins. Aids folding of multispanning membrane proteins. In Magnetococcus marinus (strain ATCC BAA-1437 / JCM 17883 / MC-1), this protein is Membrane protein insertase YidC.